The primary structure comprises 207 residues: Claudin-11 (207 aa).

Position 1 (Met-1) is a topological domain, cytoplasmic. The helical transmembrane segment at 2–22 threads the bilayer; the sequence is VATCLQVVGFVTSFVGWIGII. Residues 23-82 lie on the Extracellular side of the membrane; it reads VTTSTNDWVVTCSYTIPTCRKMDELGSKGLWADCVMATGLHHCKPLVDILILPGYAQACR. Residues 83–103 form a helical membrane-spanning segment; that stretch reads ALMIAASVLGLPGILLLLTVL. The Cytoplasmic segment spans residues 104-122; sequence PCIRMGHEPGVAKYRRAQL. Residues 123 to 143 traverse the membrane as a helical segment; it reads AGVLLILLALCAIVATIWFPV. The Extracellular segment spans residues 144-157; the sequence is CAHREITIVSFGYS. A helical transmembrane segment spans residues 158–178; the sequence is LYAGWIGAVMCLVGGCVIVCC. The Cytoplasmic portion of the chain corresponds to 179-207; the sequence is SGDAQSFGENRFYYSSGSSSPTHAKSAHV. Ser-193, Ser-194, Ser-197, and Ser-198 each carry phosphoserine.

It belongs to the claudin family. As to quaternary structure, interacts with tetraspanin-3/TSPAN3. Interacts with OCLN.

The protein localises to the cell junction. Its subcellular location is the tight junction. It is found in the cell membrane. In terms of biological role, plays a major role in tight junction-specific obliteration of the intercellular space, through calcium-independent cell-adhesion activity. The protein is Claudin-11 (Cldn11) of Rattus norvegicus (Rat).